The following is a 568-amino-acid chain: MLFKELVSLYESLRSTSSRLEKTAMIAAFLQQAPVDELPVIVTFLTGRIFPEWDQRKIGIASQSMIKIISTITHNPEDAVVESYKKTGHLGVTAEEMFQKRRQVTFFEPEDITVKEVAETFYEIARSSGAGSSAKKQKILIGLLHRATTPKEAHYIVSLTIEYVLSGAKEGVMEDAIGQAFGATLDQVRRAHMLTSDLGETARIAKTEGAAGLEAITIRPMRPVRPMLAQNVSSIREALDTMGGVAEFEMKYDGARLQIHKVGKDVKLYSRRLEDLTDALPEIVGYVRESVKSDTAILDSECIAIDKDTGRPIPFQNILTRLRRIHKVEETQKQFPLILRPFDVLFNQGQSTIDLPLRERRKILEEIVIATDSVIQPARALVTDQEEKAQELFEESVKSGNEGLMGKDLNATYTPGVRGKKMVKIKSVLDTLDLAIVSAEWGHGRKAGWLTSFEVAALDEETGDYVILGRVASGFSDEQLIEMTEKLKPLITGEHGRIVDVRPEIIVEVKFEEIQKSPIYSSGYALRFPRLVRVRDDLSPEEVNSFTRVMNIYNVQQRYSISENGLRK.

Glu-249 serves as a coordination point for ATP. Catalysis depends on Lys-251, which acts as the N6-AMP-lysine intermediate. ATP-binding residues include Arg-256, Arg-271, Glu-301, Phe-342, Arg-418, and Lys-424.

The protein belongs to the ATP-dependent DNA ligase family. Requires Mg(2+) as cofactor.

The enzyme catalyses ATP + (deoxyribonucleotide)n-3'-hydroxyl + 5'-phospho-(deoxyribonucleotide)m = (deoxyribonucleotide)n+m + AMP + diphosphate.. In terms of biological role, DNA ligase that seals nicks in double-stranded DNA during DNA replication, DNA recombination and DNA repair. This Methanocella arvoryzae (strain DSM 22066 / NBRC 105507 / MRE50) protein is DNA ligase.